We begin with the raw amino-acid sequence, 549 residues long: Glucose-6-phosphate isomerase (549 aa).

Glutamate 352 functions as the Proton donor in the catalytic mechanism. Active-site residues include histidine 383 and lysine 511.

Belongs to the GPI family.

The protein localises to the cytoplasm. It catalyses the reaction alpha-D-glucose 6-phosphate = beta-D-fructose 6-phosphate. It functions in the pathway carbohydrate biosynthesis; gluconeogenesis. Its pathway is carbohydrate degradation; glycolysis; D-glyceraldehyde 3-phosphate and glycerone phosphate from D-glucose: step 2/4. Functionally, catalyzes the reversible isomerization of glucose-6-phosphate to fructose-6-phosphate. This Methylocella silvestris (strain DSM 15510 / CIP 108128 / LMG 27833 / NCIMB 13906 / BL2) protein is Glucose-6-phosphate isomerase.